We begin with the raw amino-acid sequence, 640 residues long: 1-deoxy-D-xylulose-5-phosphate synthase (640 aa).

Residues His-75 and 117 to 119 (GHA) contribute to the thiamine diphosphate site. Asp-146 serves as a coordination point for Mg(2+). Thiamine diphosphate-binding positions include 147 to 148 (AA), Asn-175, and Glu-370. Asn-175 provides a ligand contact to Mg(2+).

This sequence belongs to the transketolase family. DXPS subfamily. In terms of assembly, homodimer. It depends on Mg(2+) as a cofactor. Thiamine diphosphate serves as cofactor.

It catalyses the reaction D-glyceraldehyde 3-phosphate + pyruvate + H(+) = 1-deoxy-D-xylulose 5-phosphate + CO2. It participates in metabolic intermediate biosynthesis; 1-deoxy-D-xylulose 5-phosphate biosynthesis; 1-deoxy-D-xylulose 5-phosphate from D-glyceraldehyde 3-phosphate and pyruvate: step 1/1. Functionally, catalyzes the acyloin condensation reaction between C atoms 2 and 3 of pyruvate and glyceraldehyde 3-phosphate to yield 1-deoxy-D-xylulose-5-phosphate (DXP). This is 1-deoxy-D-xylulose-5-phosphate synthase from Chlamydia trachomatis serovar A (strain ATCC VR-571B / DSM 19440 / HAR-13).